Here is a 313-residue protein sequence, read N- to C-terminus: Hydroxyphenylpyruvate reductase (313 aa).

NADP(+) contacts are provided by residues 152 to 155, 174 to 176, and I230; these read LGRI and SRS. Residue R232 is part of the active site. Position 256 (D256) interacts with NADP(+). Residue E261 is part of the active site. H279 acts as the Proton donor in catalysis.

Belongs to the D-isomer specific 2-hydroxyacid dehydrogenase family.

It carries out the reaction (2R)-2-hydroxy-3-(4-hydroxyphenyl)propanoate + NAD(+) = 3-(4-hydroxyphenyl)pyruvate + NADH + H(+). The catalysed reaction is (2R)-2-hydroxy-3-(4-hydroxyphenyl)propanoate + NADP(+) = 3-(4-hydroxyphenyl)pyruvate + NADPH + H(+). The enzyme catalyses (2R)-3-(3,4-dihydroxyphenyl)lactate + NADP(+) = 3-(3,4-dihydroxyphenyl)pyruvate + NADPH + H(+). It catalyses the reaction (2R)-3-(3,4-dihydroxyphenyl)lactate + NAD(+) = 3-(3,4-dihydroxyphenyl)pyruvate + NADH + H(+). Its function is as follows. Catalyzes the NAD(P)H-dependent reduction of 4-hydroxyphenylpyruvate to 4-hydroxyphenyllactate and 3,4-dihydroxyphenylpyruvate to 3,4-dihydroxyphenyllactate in the biosynthesis of rosmarinic acid. Rosmarinic acid is an ester of caffeic acid and 3,4-dihydroxyphenyllactic acid. NADP is the preferred substrate. The chain is Hydroxyphenylpyruvate reductase (HPPR) from Plectranthus scutellarioides (Coleus).